The following is a 209-amino-acid chain: MTKGILGRKIGMTQVFAENGDLIPVTVVEAAANVVLQKKTTDTDGYEAIQIGFDDKREKLSNKPEKGHVAKAETAPKRFVKELRGAELDAYEVGQEVKVDIFANGDIVDVTGTSKGKGFQGAIKRHGQSRGPMTHGSRYHRRPGSMGPVDPNRVFKGKLLPGRMGGEQITVQNLEIVKVDAERNLLLIKGNVPGAKKSLVTVKSAVKSK.

Residues 118 to 150 are disordered; the sequence is GFQGAIKRHGQSRGPMTHGSRYHRRPGSMGPVD.

Belongs to the universal ribosomal protein uL3 family. Part of the 50S ribosomal subunit. Forms a cluster with proteins L14 and L19.

One of the primary rRNA binding proteins, it binds directly near the 3'-end of the 23S rRNA, where it nucleates assembly of the 50S subunit. This Bacillus pumilus (strain SAFR-032) protein is Large ribosomal subunit protein uL3.